The chain runs to 261 residues: Indole-3-glycerol phosphate synthase (261 aa).

It belongs to the TrpC family.

The catalysed reaction is 1-(2-carboxyphenylamino)-1-deoxy-D-ribulose 5-phosphate + H(+) = (1S,2R)-1-C-(indol-3-yl)glycerol 3-phosphate + CO2 + H2O. The protein operates within amino-acid biosynthesis; L-tryptophan biosynthesis; L-tryptophan from chorismate: step 4/5. This Burkholderia vietnamiensis (strain G4 / LMG 22486) (Burkholderia cepacia (strain R1808)) protein is Indole-3-glycerol phosphate synthase.